Reading from the N-terminus, the 425-residue chain is Histidine--tRNA ligase (425 aa).

This sequence belongs to the class-II aminoacyl-tRNA synthetase family. Homodimer.

It localises to the cytoplasm. It catalyses the reaction tRNA(His) + L-histidine + ATP = L-histidyl-tRNA(His) + AMP + diphosphate + H(+). The polypeptide is Histidine--tRNA ligase (Listeria innocua serovar 6a (strain ATCC BAA-680 / CLIP 11262)).